Reading from the N-terminus, the 333-residue chain is N-acetyl-gamma-glutamyl-phosphate reductase (333 aa).

Cysteine 136 is an active-site residue.

It belongs to the NAGSA dehydrogenase family. Type 1 subfamily.

Its subcellular location is the cytoplasm. The catalysed reaction is N-acetyl-L-glutamate 5-semialdehyde + phosphate + NADP(+) = N-acetyl-L-glutamyl 5-phosphate + NADPH + H(+). It participates in amino-acid biosynthesis; L-arginine biosynthesis; N(2)-acetyl-L-ornithine from L-glutamate: step 3/4. Its function is as follows. Catalyzes the NADPH-dependent reduction of N-acetyl-5-glutamyl phosphate to yield N-acetyl-L-glutamate 5-semialdehyde. The chain is N-acetyl-gamma-glutamyl-phosphate reductase from Xylella fastidiosa (strain 9a5c).